The primary structure comprises 939 residues: Probable importin ECU10_0620 (939 aa).

Residues 23–90 (AEAMLMDLEK…VENILDLFLY (68 aa)) form the Importin N-terminal domain.

It belongs to the importin beta family.

It is found in the nucleus. The protein resides in the cytoplasm. Functionally, active in protein import into the nucleus. This Encephalitozoon cuniculi (strain GB-M1) (Microsporidian parasite) protein is Probable importin ECU10_0620.